The following is a 209-amino-acid chain: Large ribosomal subunit protein uL3 (209 aa).

The disordered stretch occupies residues 141 to 163 (RAVGSMGASSDPSRTFKNKRMPG).

Belongs to the universal ribosomal protein uL3 family. In terms of assembly, part of the 50S ribosomal subunit. Forms a cluster with proteins L14 and L19.

One of the primary rRNA binding proteins, it binds directly near the 3'-end of the 23S rRNA, where it nucleates assembly of the 50S subunit. In Clostridium botulinum (strain Langeland / NCTC 10281 / Type F), this protein is Large ribosomal subunit protein uL3.